We begin with the raw amino-acid sequence, 179 residues long: Cell division protein ZapC (179 aa).

This sequence belongs to the ZapC family. Interacts directly with FtsZ.

The protein resides in the cytoplasm. In terms of biological role, contributes to the efficiency of the cell division process by stabilizing the polymeric form of the cell division protein FtsZ. Acts by promoting interactions between FtsZ protofilaments and suppressing the GTPase activity of FtsZ. This is Cell division protein ZapC from Ferrimonas balearica (strain DSM 9799 / CCM 4581 / KCTC 23876 / PAT).